A 123-amino-acid chain; its full sequence is uncharacterized protein (123 aa).

The first 19 residues, 1–19 (MKIKYFFIPLFSSAILFSA), serve as a signal peptide directing secretion. C20 carries the N-palmitoyl cysteine lipid modification. C20 carries S-diacylglycerol cysteine lipidation.

This sequence belongs to the MG439/MG440 family.

Its subcellular location is the cell membrane. This is an uncharacterized protein from Mycoplasma pneumoniae (strain ATCC 29342 / M129 / Subtype 1) (Mycoplasmoides pneumoniae).